The sequence spans 263 residues: uncharacterized protein (263 aa).

Helical transmembrane passes span 1-21 (MLVI…ILCQ), 38-58 (LFLL…HYCY), 82-102 (IPIS…CMMV), 118-138 (GISI…IFTY), 151-171 (GKFG…ANLL), 196-216 (FALI…VIPT), and 230-250 (FWVK…VQYV).

Its subcellular location is the membrane. This is an uncharacterized protein from Saccharomyces cerevisiae (strain ATCC 204508 / S288c) (Baker's yeast).